Here is a 198-residue protein sequence, read N- to C-terminus: ATP-dependent Clp protease proteolytic subunit (198 aa).

Ser-98 (nucleophile) is an active-site residue. Residue His-123 is part of the active site.

It belongs to the peptidase S14 family. As to quaternary structure, fourteen ClpP subunits assemble into 2 heptameric rings which stack back to back to give a disk-like structure with a central cavity, resembling the structure of eukaryotic proteasomes.

The protein localises to the cytoplasm. The enzyme catalyses Hydrolysis of proteins to small peptides in the presence of ATP and magnesium. alpha-casein is the usual test substrate. In the absence of ATP, only oligopeptides shorter than five residues are hydrolyzed (such as succinyl-Leu-Tyr-|-NHMec, and Leu-Tyr-Leu-|-Tyr-Trp, in which cleavage of the -Tyr-|-Leu- and -Tyr-|-Trp bonds also occurs).. Cleaves peptides in various proteins in a process that requires ATP hydrolysis. Has a chymotrypsin-like activity. Plays a major role in the degradation of misfolded proteins. This chain is ATP-dependent Clp protease proteolytic subunit, found in Bacillus pumilus (strain SAFR-032).